We begin with the raw amino-acid sequence, 371 residues long: uncharacterized protein (371 aa).

The next 8 helical transmembrane spans lie at 4-24 (LPML…FIYG), 60-82 (LIQL…ALYG), 87-109 (LWIV…MLSI), 130-150 (VFIN…FVAS), 197-217 (VVAV…LLPV), 224-244 (IYPL…YGLV), 282-302 (VPIW…GFHA), and 320-340 (FIFY…CMVG).

This sequence belongs to the peptide transporter carbon starvation (CstA) (TC 2.A.114) family.

The protein localises to the cell membrane. This is an uncharacterized protein from Haemophilus influenzae (strain ATCC 51907 / DSM 11121 / KW20 / Rd).